The primary structure comprises 94 residues: Large ribosomal subunit protein bL27 (94 aa).

Residues 1–9 (MTLNNLQLF) constitute a propeptide that is removed on maturation. The disordered stretch occupies residues 9-33 (FAHKKGGGSTSNGRDSQAKRLGAKA).

Belongs to the bacterial ribosomal protein bL27 family. The N-terminus is cleaved by ribosomal processing cysteine protease Prp.

The polypeptide is Large ribosomal subunit protein bL27 (Streptococcus pneumoniae serotype 4 (strain ATCC BAA-334 / TIGR4)).